The chain runs to 318 residues: Ornithine carbamoyltransferase (318 aa).

Residues S63 to T66, Q90, R114, and H141 to Q144 contribute to the carbamoyl phosphate site. L-ornithine is bound by residues N172, D235, and S239 to M240. Carbamoyl phosphate is bound by residues C275–L276 and R303.

Belongs to the aspartate/ornithine carbamoyltransferase superfamily. OTCase family.

Its subcellular location is the cytoplasm. It catalyses the reaction carbamoyl phosphate + L-ornithine = L-citrulline + phosphate + H(+). It functions in the pathway amino-acid biosynthesis; L-arginine biosynthesis; L-arginine from L-ornithine and carbamoyl phosphate: step 1/3. Functionally, reversibly catalyzes the transfer of the carbamoyl group from carbamoyl phosphate (CP) to the N(epsilon) atom of ornithine (ORN) to produce L-citrulline. The sequence is that of Ornithine carbamoyltransferase from Prochlorococcus marinus (strain SARG / CCMP1375 / SS120).